We begin with the raw amino-acid sequence, 79 residues long: Small ribosomal subunit protein bS18c (79 aa).

The protein belongs to the bacterial ribosomal protein bS18 family. In terms of assembly, part of the 30S ribosomal subunit.

It is found in the plastid. It localises to the chloroplast. The polypeptide is Small ribosomal subunit protein bS18c (Physcomitrium patens (Spreading-leaved earth moss)).